Here is a 125-residue protein sequence, read N- to C-terminus: Small ribosomal subunit protein uS13 (125 aa).

It belongs to the universal ribosomal protein uS13 family. In terms of assembly, part of the 30S ribosomal subunit. Forms a loose heterodimer with protein S19. Forms two bridges to the 50S subunit in the 70S ribosome.

Located at the top of the head of the 30S subunit, it contacts several helices of the 16S rRNA. In the 70S ribosome it contacts the 23S rRNA (bridge B1a) and protein L5 of the 50S subunit (bridge B1b), connecting the 2 subunits; these bridges are implicated in subunit movement. Contacts the tRNAs in the A and P-sites. This chain is Small ribosomal subunit protein uS13, found in Gluconobacter oxydans (strain 621H) (Gluconobacter suboxydans).